We begin with the raw amino-acid sequence, 383 residues long: L-Ala-D/L-Glu epimerase (383 aa).

Residues Arg68, Tyr94, and 198–200 (KVK) contribute to the substrate site. Mg(2+) is bound by residues Asp224, Glu251, and Asp276. Substrate is bound by residues Lys298, 326–328 (CMT), and 348–350 (DLD).

Belongs to the mandelate racemase/muconate lactonizing enzyme family. Mg(2+) serves as cofactor.

The catalysed reaction is L-alanyl-L-glutamate = L-alanyl-D-glutamate. Catalyzes the epimerization of L-Ala-D-Glu to L-Ala-L-Glu and may play a role in the metabolism of the murein peptide, of which L-Ala-D-Glu is a component. Is also able to catalyze the epimerization of L-Ala-D-Asp, L-Ala-L-Glu, L-Ala-L-Ser, L-Ala-L-Pro, L-Ala-L-L-Val, L-Ala-L-Thr, L-Ala-L-Leu, L-Ala-L-Ile and L-Gly-L-Glu (in vitro). This Bacteroides thetaiotaomicron (strain ATCC 29148 / DSM 2079 / JCM 5827 / CCUG 10774 / NCTC 10582 / VPI-5482 / E50) protein is L-Ala-D/L-Glu epimerase.